We begin with the raw amino-acid sequence, 598 residues long: Chromodomain Y-like protein (598 aa).

Residues 1–76 (MTFQASHRSA…VDKRKNKKGK (76 aa)) are disordered. Polar residues predominate over residues 44–56 (PSISVSSEQSGAQ). Positions 61–121 (LQVERIVDKR…RHTEKQKEST (61 aa)) constitute a Chromo domain. An interaction with EZH2 region spans residues 61–309 (LQVERIVDKR…NIQTSVTGVT (249 aa)). Over residues 65–76 (RIVDKRKNKKGK) the composition is skewed to basic and acidic residues. Ser-88 is modified (phosphoserine). A compositionally biased stretch (basic and acidic residues) spans 112 to 121 (RHTEKQKEST). The interval 112–149 (RHTEKQKESTLTRTNRTSPNNARKQISRSTNSNFSKTS) is disordered. A compositionally biased stretch (polar residues) spans 122 to 149 (LTRTNRTSPNNARKQISRSTNSNFSKTS). The residue at position 135 (Lys-135) is an N6,N6,N6-trimethyllysine; by EHMT2; alternate. Lys-135 bears the N6,N6-dimethyllysine; by EHMT2; alternate mark. Lys-135 bears the N6-methyllysine; by EHMT2; alternate mark. Phosphoserine occurs at positions 170, 201, and 216. Residues 204–226 (KSRTAVDGFQSESPEKLDPVEQG) are disordered. The acetyl-CoA-binding domain stretch occupies residues 362–594 (SENNSLNPEV…DSMLKYLQRK (233 aa)).

Forms multimers and multimerization is required for stable binding to chromatin. Interacts with HDAC1 and HDAC2 via its C-terminal acetyl-CoA-binding domain. Interacts with EZH2, EED, SUZ12, REST, EHMT1 and EHMT2. Part of a complex containing at least CDYL, REST, WIZ, SETB1, EHMT1 and EHMT2. Part of a complex containing at least CDYL, MIER1, MIER2, HDAC1 and HDAC2. Interacts with CHAF1A and CHAF1B; bridging the CAF-1 complex to the MCM2-7 (MCM) complex. Interacts with MCM3 and MCM5; bridging the CAF-1 complex to the MCM2-7 (MCM) complex. Recruited to Xist RNA-coated X chromosome. Interacts with EHMT2 and PRDM9; interaction only takes place when PRDM9 is bound to hotspot DNA. In terms of tissue distribution, expressed in the hippocampus with reduced expression in epileptic tissue compared to normal adjacent tissue (at protein level). Ubiquitous. Expressed at moderate levels in all tissues examined. Isoform 2: Most abundantly expressed isoform.

Its subcellular location is the nucleus. The protein resides in the chromosome. It carries out the reaction 3-hydroxybutanoyl-CoA = (2E)-butenoyl-CoA + H2O. Its function is as follows. Chromatin reader protein that recognizes and binds histone H3 trimethylated at 'Lys-9', dimethylated at 'Lys-27' and trimethylated at 'Lys-27' (H3K9me3, H3K27me2 and H3K27me3, respectively). Part of multimeric repressive chromatin complexes, where it is required for transmission and restoration of repressive histone marks, thereby preserving the epigenetic landscape. Required for chromatin targeting and maximal enzymatic activity of Polycomb repressive complex 2 (PRC2); acts as a positive regulator of PRC2 activity by bridging the pre-existing histone H3K27me3 and newly recruited PRC2 on neighboring nucleosomes. Acts as a corepressor for REST by facilitating histone-lysine N-methyltransferase EHMT2 recruitment and H3K9 dimethylation at REST target genes for repression. Involved in X chromosome inactivation in females: recruited to Xist RNA-coated X chromosome and facilitates propagation of H3K9me2 by anchoring EHMT2. Promotes EZH2 accumulation and H3K27me3 methylation at DNA double strand breaks (DSBs), thereby facilitating transcriptional repression at sites of DNA damage and homology-directed repair of DSBs. Required for neuronal migration during brain development by repressing expression of RHOA. By repressing the expression of SCN8A, contributes to the inhibition of intrinsic neuronal excitability and epileptogenesis. In addition to acting as a chromatin reader, acts as a hydro-lyase. Shows crotonyl-coA hydratase activity by mediating the conversion of crotonyl-CoA ((2E)-butenoyl-CoA) to beta-hydroxybutyryl-CoA (3-hydroxybutanoyl-CoA), thereby acting as a negative regulator of histone crotonylation. Histone crotonylation is required during spermatogenesis; down-regulation of histone crotonylation by CDYL regulates the reactivation of sex chromosome-linked genes in round spermatids and histone replacement in elongating spermatids. By regulating histone crotonylation and trimethylation of H3K27, may be involved in stress-induced depression-like behaviors, possibly by regulating VGF expression. Not able to recognize and bind histone H3K9me3, histone H3K27me2 and histone H3K27me3, due to the presence of a N-terminal extension that inactivates the chromo domain. Functionally, not able to recognize and bind histone H3K9me3, histone H3K27me2 and histone H3K27me3, due to the absence of the chromo domain. Acts as a negative regulator of isoform 2 by displacing isoform 2 from chromatin. This chain is Chromodomain Y-like protein, found in Homo sapiens (Human).